Consider the following 322-residue polypeptide: Ferredoxin--NADP reductase (322 aa).

Residues Thr12, Glu31, Gln39, Tyr44, Ala86, Phe119, and Thr317 each contribute to the FAD site.

It belongs to the ferredoxin--NADP reductase type 2 family. As to quaternary structure, homodimer. It depends on FAD as a cofactor.

The enzyme catalyses 2 reduced [2Fe-2S]-[ferredoxin] + NADP(+) + H(+) = 2 oxidized [2Fe-2S]-[ferredoxin] + NADPH. The polypeptide is Ferredoxin--NADP reductase (Acholeplasma laidlawii (strain PG-8A)).